Here is a 316-residue protein sequence, read N- to C-terminus: Glutathione synthetase (316 aa).

In terms of domain architecture, ATP-grasp spans 125-310 (KLFTAWFSDL…ITGMLMDAIE (186 aa)). A glycan (N-beta-linked (GlcNAc) arginine) is linked at arginine 256. Mg(2+) is bound by residues glutamate 281 and asparagine 283.

This sequence belongs to the prokaryotic GSH synthase family. It depends on Mg(2+) as a cofactor. Requires Mn(2+) as cofactor.

The enzyme catalyses gamma-L-glutamyl-L-cysteine + glycine + ATP = glutathione + ADP + phosphate + H(+). It functions in the pathway sulfur metabolism; glutathione biosynthesis; glutathione from L-cysteine and L-glutamate: step 2/2. The polypeptide is Glutathione synthetase (Escherichia coli O127:H6 (strain E2348/69 / EPEC)).